The chain runs to 284 residues: ATP synthase subunit beta, chloroplastic (284 aa).

Belongs to the ATPase alpha/beta chains family. In terms of assembly, F-type ATPases have 2 components, CF(1) - the catalytic core - and CF(0) - the membrane proton channel. CF(1) has five subunits: alpha(3), beta(3), gamma(1), delta(1), epsilon(1). CF(0) has four main subunits: a(1), b(1), b'(1) and c(9-12).

The protein resides in the plastid. It localises to the chloroplast thylakoid membrane. The catalysed reaction is ATP + H2O + 4 H(+)(in) = ADP + phosphate + 5 H(+)(out). Functionally, produces ATP from ADP in the presence of a proton gradient across the membrane. The catalytic sites are hosted primarily by the beta subunits. The polypeptide is ATP synthase subunit beta, chloroplastic (atpB) (Asplenium nidus (Bird's nest fern)).